Here is a 202-residue protein sequence, read N- to C-terminus: MRLWLVRHGETEANVAGLYSGHAPTPLTEKGIGQAKTLHTLLRHAPFDRVLCSELERARHTARLVLEGRDVPQHILPELNEMYFGDWEMRHHRDLTHEDAESYAAWCTDWQNAVPTNGEGFQAFTRRVERFISRLDAFSDCQNLLIVSHQGVLSLLIARLLTMPAASLWHFRVEQGCWSAIDICEGFATLKVLNSRAVWRPE.

Catalysis depends on His-8, which acts as the Tele-phosphohistidine intermediate. Glu-81 acts as the Proton donor/acceptor in catalysis.

Belongs to the phosphoglycerate mutase family. In terms of assembly, monomer.

The enzyme catalyses adenosylcob(III)alamin 5'-phosphate + H2O = adenosylcob(III)alamin + phosphate. It carries out the reaction alpha-ribazole 5'-phosphate + H2O = alpha-ribazole + phosphate. The protein operates within nucleoside biosynthesis; alpha-ribazole biosynthesis; alpha-ribazole from 5,6-dimethylbenzimidazole: step 2/2. In terms of biological role, catalyzes the conversion of adenosylcobalamin 5'-phosphate to adenosylcobalamin (vitamin B12); involved in the assembly of the nucleotide loop of cobalamin. Also catalyzes the hydrolysis of the phospho group from alpha-ribazole 5'-phosphate to form alpha-ribazole. In Salmonella typhimurium (strain LT2 / SGSC1412 / ATCC 700720), this protein is Adenosylcobalamin/alpha-ribazole phosphatase (cobC).